The primary structure comprises 546 residues: Probable Xaa-Pro aminopeptidase pepP (546 aa).

Mn(2+)-binding residues include aspartate 341, aspartate 352, glutamate 475, and glutamate 515.

It belongs to the peptidase M24B family. Mn(2+) is required as a cofactor.

The catalysed reaction is Release of any N-terminal amino acid, including proline, that is linked to proline, even from a dipeptide or tripeptide.. Its function is as follows. Catalyzes the removal of a penultimate prolyl residue from the N-termini of peptides. This chain is Probable Xaa-Pro aminopeptidase pepP (pepP), found in Sclerotinia sclerotiorum (strain ATCC 18683 / 1980 / Ss-1) (White mold).